The sequence spans 371 residues: Dihydroorotate dehydrogenase (quinone) (371 aa).

Residues 79-83 (AGFDK) and Thr103 contribute to the FMN site. Lys83 contacts substrate. 128–132 (NRMGF) is a substrate binding site. Positions 156 and 189 each coordinate FMN. A substrate-binding site is contributed by Asn189. Residue Ser192 is the Nucleophile of the active site. Asn194 lines the substrate pocket. Positions 225 and 253 each coordinate FMN. 254 to 255 (NT) contributes to the substrate binding site. Residues Gly279, Gly308, and 329–330 (YT) contribute to the FMN site.

The protein belongs to the dihydroorotate dehydrogenase family. Type 2 subfamily. Monomer. FMN serves as cofactor.

The protein resides in the cell membrane. It carries out the reaction (S)-dihydroorotate + a quinone = orotate + a quinol. Its pathway is pyrimidine metabolism; UMP biosynthesis via de novo pathway; orotate from (S)-dihydroorotate (quinone route): step 1/1. Its function is as follows. Catalyzes the conversion of dihydroorotate to orotate with quinone as electron acceptor. This chain is Dihydroorotate dehydrogenase (quinone), found in Corynebacterium glutamicum (strain ATCC 13032 / DSM 20300 / JCM 1318 / BCRC 11384 / CCUG 27702 / LMG 3730 / NBRC 12168 / NCIMB 10025 / NRRL B-2784 / 534).